Consider the following 619-residue polypeptide: Chitinase C (619 aa).

The signal sequence occupies residues 1–30 (MRFRHKAAALAATLALPLAGLVGLASPAQA). Residues 31-134 (ATSATATFAK…KLNGGSCDGT (104 aa)) enclose the CBM2 domain. In terms of domain architecture, Fibronectin type-III spans 144 to 229 (APGTPTASNI…GAVKVTTTGG (86 aa)). The disordered stretch occupies residues 212 to 236 (ADQTGPASGAVKVTTTGGGDGGNPG). The span at 227–236 (TGGGDGGNPG) shows a compositional bias: gly residues. Residues 240–619 (EVKMGYFTNW…TPAVRTTRRH (380 aa)) enclose the GH18 domain. Chitin is bound by residues 312–313 (DQ) and 339–342 (GGWT). The Proton donor role is filled by E382. Residues Y383, 449 to 452 (MTYD), and W589 each bind chitin.

It belongs to the glycosyl hydrolase 18 family. Chitinase class II subfamily.

It catalyses the reaction Random endo-hydrolysis of N-acetyl-beta-D-glucosaminide (1-&gt;4)-beta-linkages in chitin and chitodextrins.. The chain is Chitinase C (chiC) from Streptomyces lividans.